The chain runs to 330 residues: Putative [LysW]-L-2-aminoadipate/[LysW]-L-glutamate phosphate reductase (330 aa).

10 to 13 (SGYI) is an NADP(+) binding site. C142 is a catalytic residue. N297 contacts NADP(+).

This sequence belongs to the NAGSA dehydrogenase family. Type 1 subfamily. LysY sub-subfamily.

Its subcellular location is the cytoplasm. The catalysed reaction is [amino-group carrier protein]-C-terminal-N-(1-carboxy-5-oxopentan-1-yl)-L-glutamine + phosphate + NADP(+) = [amino-group carrier protein]-C-terminal-N-(1-carboxy-5-phosphooxy-5-oxopentan-1-yl)-L-glutamine + NADPH + H(+). It carries out the reaction [amino-group carrier protein]-C-terminal-gamma-(L-glutamyl-5-semialdehyde)-L-glutamate + phosphate + NADP(+) = [amino-group carrier protein]-C-terminal-gamma-(5-phospho-L-glutamyl)-L-glutamate + NADPH + H(+). The protein operates within amino-acid biosynthesis; L-lysine biosynthesis via AAA pathway; L-lysine from L-alpha-aminoadipate (Thermus route): step 3/5. It functions in the pathway amino-acid biosynthesis; L-arginine biosynthesis. Functionally, involved in both the arginine and lysine biosynthetic pathways. This Pyrococcus horikoshii (strain ATCC 700860 / DSM 12428 / JCM 9974 / NBRC 100139 / OT-3) protein is Putative [LysW]-L-2-aminoadipate/[LysW]-L-glutamate phosphate reductase.